We begin with the raw amino-acid sequence, 575 residues long: Probable ferredoxin/ferredoxin--NADP reductase (575 aa).

2 4Fe-4S ferredoxin-type domains span residues 2 to 29 (PHVI…PTPD) and 37 to 66 (EMLY…PNTR). Positions 9, 15, 19, 46, 49, 52, and 56 each coordinate [4Fe-4S] cluster. Positions 115–575 (VAVVGSGPAA…GQPIVLTVPL (461 aa)) are ferredoxin--NADP reductase. Alanine 123, glutamate 143, leucine 151, and isoleucine 187 together coordinate FAD. Residues arginine 213, 258–261 (NGNV), 302–303 (RR), and glutamate 314 each bind NADP(+). FAD-binding positions include tryptophan 456 and 463–465 (GFI). Position 463 (glycine 463) interacts with NADP(+).

It in the C-terminal section; belongs to the ferredoxin--NADP reductase family. [4Fe-4S] cluster is required as a cofactor. Requires FAD as cofactor.

It catalyses the reaction 2 reduced [2Fe-2S]-[ferredoxin] + NADP(+) + H(+) = 2 oxidized [2Fe-2S]-[ferredoxin] + NADPH. This is Probable ferredoxin/ferredoxin--NADP reductase (fprB) from Mycobacterium bovis (strain ATCC BAA-935 / AF2122/97).